The sequence spans 247 residues: Uridylate kinase (247 aa).

Residue 18 to 21 coordinates ATP; the sequence is KLSG. Gly-60 contacts UMP. ATP contacts are provided by Gly-61 and Arg-65. UMP contacts are provided by residues Asp-80 and 141–148; that span reads TGNPFFTT. ATP is bound by residues Thr-168, Tyr-174, and Asp-177.

The protein belongs to the UMP kinase family. In terms of assembly, homohexamer.

Its subcellular location is the cytoplasm. The enzyme catalyses UMP + ATP = UDP + ADP. It functions in the pathway pyrimidine metabolism; CTP biosynthesis via de novo pathway; UDP from UMP (UMPK route): step 1/1. Its activity is regulated as follows. Inhibited by UTP. Catalyzes the reversible phosphorylation of UMP to UDP. This Pseudomonas fluorescens (strain ATCC BAA-477 / NRRL B-23932 / Pf-5) protein is Uridylate kinase.